The sequence spans 658 residues: MTSIRTSNCASEGRRLTILYMTQTGTSSDLALRISRQAQRKRFHVTIADVCSYDPTDLVSESLMLFLVSTTGQGEFPTTSRPFWNFLLRKGIPEDILEDVTFAAFGLGDSTYPRFCWPVRLLSRRLRGLGAKELVEHGEGDDMHYLGLEGELGPWMNRFWRKLDELCPLEAGVREVGRDELLPPSVTVTKVETEEGRLKEKHDGRDALGRHLEDQGWSISILDKNQRMTATDHFQDVRLLEFVRLNQTDVEEDKRQIGENEEISRGSASALDGISIQTYRPGDILCLHPINDAASVTEMLSRLDLDADTLVSLAGSTIPSTVPQSPAHMSVRDLLTHHLDFTSVPTNSFFEQIRLFSPTGSQEREKLDEYCGIFPEEELAKGANPQDGIDEMYEYAQRPRRTIKEVLDEFKSVQVPLAYIADVLPWIKPREFSIASAPPANSEREKRVSEEPHAIQLSVAMVKYKTRLRKARTGLCTRWLSSLPLGSRVPVVIKPGYLTLPPAQAPLILIGPGTGCAPLRSLVIDRLSNSTLARSEIHLFLGFRYRTKDYLFQHDWQHLQQSYANQFHLHTAFSRDGEAKTYVQDLIVKPDNAHVLWEAITERNAWIVVAGASGKMPEQVRGAFESIARSQGGMDEEQAKRFMDALERQRRWQEECWG.

Residues leucine 16–tryptophan 160 form the Flavodoxin-like domain. Residues threonine 22–serine 27, serine 69–glycine 72, leucine 107–cysteine 116, and aspartate 142 contribute to the FMN site. One can recognise an FAD-binding FR-type domain in the interval glutamine 215 to proline 502. Residues arginine 400, arginine 430–serine 433, and glycine 474–threonine 477 each bind FAD. NADP(+) contacts are provided by residues threonine 514, serine 574–arginine 575, and lysine 580–glutamine 584. Tryptophan 657 serves as a coordination point for FAD.

This sequence belongs to the NADPH-dependent diflavin oxidoreductase NDOR1 family. It in the N-terminal section; belongs to the flavodoxin family. The protein in the C-terminal section; belongs to the flavoprotein pyridine nucleotide cytochrome reductase family. In terms of assembly, interacts with DRE2; as part of the cytosolic iron-sulfur (Fe-S) protein assembly (CIA) machinery. Requires FAD as cofactor. FMN is required as a cofactor.

The protein localises to the cytoplasm. It localises to the mitochondrion. It catalyses the reaction 2 oxidized [2Fe-2S]-[protein] + NADPH = 2 reduced [2Fe-2S]-[protein] + NADP(+) + H(+). NADPH-dependent reductase which is a central component of the cytosolic iron-sulfur (Fe-S) protein assembly (CIA) machinery. Transfers electrons from NADPH via its FAD and FMN prosthetic groups to the [2Fe-2S] cluster of DRE2, another key component of the CIA machinery. In turn, this reduced cluster provides electrons for assembly of cytosolic iron-sulfur cluster proteins. Positively controls H(2)O(2)-induced cell death. The sequence is that of NADPH-dependent diflavin oxidoreductase 1 from Mycosarcoma maydis (Corn smut fungus).